A 450-amino-acid polypeptide reads, in one-letter code: Protein phosphatase 1F (450 aa).

Residues 152 to 409 enclose the PPM-type phosphatase domain; it reads LVSIHAIRNT…DNITVMVVFL (258 aa). 4 residues coordinate Mn(2+): Asp-194, Gly-195, Asp-356, and Asp-400. The segment at 420–450 is disordered; that stretch reads GQGAGGAQADVGSQDLSTGLSELEINTSQRS. Residues 433–450 are compositionally biased toward polar residues; sequence QDLSTGLSELEINTSQRS. The residue at position 450 (Ser-450) is a Phosphoserine.

It belongs to the PP2C family. As to quaternary structure, associates with FEM1B. Mg(2+) serves as cofactor. Mn(2+) is required as a cofactor.

The catalysed reaction is O-phospho-L-seryl-[protein] + H2O = L-seryl-[protein] + phosphate. It catalyses the reaction O-phospho-L-threonyl-[protein] + H2O = L-threonyl-[protein] + phosphate. In terms of biological role, dephosphorylates and concomitantly deactivates CaM-kinase II activated upon autophosphorylation, and CaM-kinases IV and I activated upon phosphorylation by CaM-kinase kinase. Promotes apoptosis. The polypeptide is Protein phosphatase 1F (Ppm1f) (Rattus norvegicus (Rat)).